Consider the following 137-residue polypeptide: Large ribosomal subunit protein uL14 (137 aa).

Belongs to the universal ribosomal protein uL14 family. Component of the large ribosomal subunit. Mature ribosomes consist of a small (40S) and a large (60S) subunit. The 40S subunit contains about 32 different proteins and 1 molecule of RNA (18S). The 60S subunit contains 45 different proteins and 3 molecules of RNA (25S, 5.8S and 5S).

It localises to the cytoplasm. Its function is as follows. Component of the ribosome, a large ribonucleoprotein complex responsible for the synthesis of proteins in the cell. The small ribosomal subunit (SSU) binds messenger RNAs (mRNAs) and translates the encoded message by selecting cognate aminoacyl-transfer RNA (tRNA) molecules. The large subunit (LSU) contains the ribosomal catalytic site termed the peptidyl transferase center (PTC), which catalyzes the formation of peptide bonds, thereby polymerizing the amino acids delivered by tRNAs into a polypeptide chain. The nascent polypeptides leave the ribosome through a tunnel in the LSU and interact with protein factors that function in enzymatic processing, targeting, and the membrane insertion of nascent chains at the exit of the ribosomal tunnel. This chain is Large ribosomal subunit protein uL14, found in Candida albicans (strain SC5314 / ATCC MYA-2876) (Yeast).